We begin with the raw amino-acid sequence, 842 residues long: Histidine biosynthesis trifunctional protein (842 aa).

A phosphoribosyl-AMP cyclohydrolase region spans residues 1–275 (MTFPLLPAYA…FVVEQTGVGF (275 aa)). Residues 276–357 (CHLERTSCFG…FYFALVRCAK (82 aa)) form a phosphoribosyl-ATP pyrophosphohydrolase region. The tract at residues 358–842 (YGVTLDEVER…KVRMEKLGLI (485 aa)) is histidinol dehydrogenase. Positions 380–403 (KGDAKPGYTKEQPKEESKPKEVPS) are disordered. Residues 390–403 (EQPKEESKPKEVPS) show a composition bias toward basic and acidic residues. Residues Gln667 and His670 each contribute to the Zn(2+) site. Residues Glu736 and His737 contribute to the active site. Zn(2+) is bound by residues Asp769 and His828.

In the C-terminal section; belongs to the histidinol dehydrogenase family. It depends on Zn(2+) as a cofactor.

The catalysed reaction is 1-(5-phospho-beta-D-ribosyl)-5'-AMP + H2O = 1-(5-phospho-beta-D-ribosyl)-5-[(5-phospho-beta-D-ribosylamino)methylideneamino]imidazole-4-carboxamide. It carries out the reaction 1-(5-phospho-beta-D-ribosyl)-ATP + H2O = 1-(5-phospho-beta-D-ribosyl)-5'-AMP + diphosphate + H(+). It catalyses the reaction L-histidinol + 2 NAD(+) + H2O = L-histidine + 2 NADH + 3 H(+). Its pathway is amino-acid biosynthesis; L-histidine biosynthesis; L-histidine from 5-phospho-alpha-D-ribose 1-diphosphate: step 2/9. It functions in the pathway amino-acid biosynthesis; L-histidine biosynthesis; L-histidine from 5-phospho-alpha-D-ribose 1-diphosphate: step 3/9. The protein operates within amino-acid biosynthesis; L-histidine biosynthesis; L-histidine from 5-phospho-alpha-D-ribose 1-diphosphate: step 9/9. This chain is Histidine biosynthesis trifunctional protein (HIS4), found in Komagataella pastoris (Yeast).